Reading from the N-terminus, the 199-residue chain is Transgelin-3 (199 aa).

The Calponin-homology (CH) domain occupies 24–136 (ADLENKLVDW…RTLMALGSVA (113 aa)). The residue at position 163 (Ser163) is a Phosphoserine. The Calponin-like repeat unit spans residues 174–199 (IGLQMGSNKGASQAGMTGYGMPRQIM). Polar residues predominate over residues 178–188 (MGSNKGASQAG). Positions 178-199 (MGSNKGASQAGMTGYGMPRQIM) are disordered.

The protein belongs to the calponin family. As to expression, abundant and ubiquitous expression in neurons.

The chain is Transgelin-3 (Tagln3) from Rattus norvegicus (Rat).